Consider the following 405-residue polypeptide: Acetate kinase (405 aa).

N7 is a binding site for Mg(2+). K14 contacts ATP. R99 is a substrate binding site. The active-site Proton donor/acceptor is the D156. Position 215-219 (H215–G219) interacts with ATP. E391 lines the Mg(2+) pocket.

Belongs to the acetokinase family. As to quaternary structure, homodimer. Mg(2+) serves as cofactor. The cofactor is Mn(2+).

Its subcellular location is the cytoplasm. It carries out the reaction acetate + ATP = acetyl phosphate + ADP. It functions in the pathway metabolic intermediate biosynthesis; acetyl-CoA biosynthesis; acetyl-CoA from acetate: step 1/2. Functionally, catalyzes the formation of acetyl phosphate from acetate and ATP. Can also catalyze the reverse reaction. The chain is Acetate kinase from Nostoc sp. (strain PCC 7120 / SAG 25.82 / UTEX 2576).